The chain runs to 253 residues: Phosphoadenosine 5'-phosphosulfate reductase (253 aa).

The active-site Nucleophile; cysteine thiosulfonate intermediate is the C239.

This sequence belongs to the PAPS reductase family. CysH subfamily.

It localises to the cytoplasm. The enzyme catalyses [thioredoxin]-disulfide + sulfite + adenosine 3',5'-bisphosphate + 2 H(+) = [thioredoxin]-dithiol + 3'-phosphoadenylyl sulfate. It functions in the pathway sulfur metabolism; hydrogen sulfide biosynthesis; sulfite from sulfate: step 3/3. Its function is as follows. Catalyzes the formation of sulfite from phosphoadenosine 5'-phosphosulfate (PAPS) using thioredoxin as an electron donor. The polypeptide is Phosphoadenosine 5'-phosphosulfate reductase (Photobacterium profundum (strain SS9)).